The chain runs to 396 residues: Protein ANTAGONIST OF LIKE HETEROCHROMATIN PROTEIN 1 (396 aa).

2 stretches are compositionally biased toward basic residues: residues 1–12 and 20–29; these read MAPVKQKKKNKK and KLAKNKEKKR. Positions 1–29 are disordered; the sequence is MAPVKQKKKNKKKPLDKAKKLAKNKEKKR. A Nuclear localization signal motif is present at residues 6–13; it reads QKKKNKKK. The DDE Tnp4 domain occupies 183–348; sequence IDTTHIIMTL…IILVCCLLHN (166 aa).

The protein belongs to the HARBI1 family. As to quaternary structure, interacts with core components of POLYCOMB REPRESSIVE COMPLEX 2 (PRC2), a PcG protein complex with H3K27me3 histone methyltransferase activity. Associates with plant-specific PRC2 accessory components such as MSI1, EMF2, VRN2, FIE and CLF. A divalent metal cation is required as a cofactor. Expressed in roots, inflorescence stems, seedlings, leaves, flower buds, inflorescences, and siliques.

Its subcellular location is the nucleus. In terms of biological role, transposase-derived protein that may have nuclease activity. Antagonist of polycomb-group (PcG) protein-mediated chromatin silencing, probably by preventing the association of POLYCOMB REPRESSIVE COMPLEX 2 (PRC2) with its accessory components. Needed for full reactivation of several floral homeotic genes that are repressed by PcG. This Arabidopsis thaliana (Mouse-ear cress) protein is Protein ANTAGONIST OF LIKE HETEROCHROMATIN PROTEIN 1.